Here is a 316-residue protein sequence, read N- to C-terminus: 4-hydroxy-3-methylbut-2-enyl diphosphate reductase (316 aa).

Cysteine 12 serves as a coordination point for [4Fe-4S] cluster. (2E)-4-hydroxy-3-methylbut-2-enyl diphosphate-binding residues include histidine 41 and histidine 74. Positions 41 and 74 each coordinate dimethylallyl diphosphate. Isopentenyl diphosphate-binding residues include histidine 41 and histidine 74. Cysteine 96 provides a ligand contact to [4Fe-4S] cluster. Histidine 124 is a (2E)-4-hydroxy-3-methylbut-2-enyl diphosphate binding site. Position 124 (histidine 124) interacts with dimethylallyl diphosphate. An isopentenyl diphosphate-binding site is contributed by histidine 124. Glutamate 126 (proton donor) is an active-site residue. Threonine 167 lines the (2E)-4-hydroxy-3-methylbut-2-enyl diphosphate pocket. Position 197 (cysteine 197) interacts with [4Fe-4S] cluster. The (2E)-4-hydroxy-3-methylbut-2-enyl diphosphate site is built by serine 225, serine 226, asparagine 227, and serine 269. Residues serine 225, serine 226, asparagine 227, and serine 269 each coordinate dimethylallyl diphosphate. Residues serine 225, serine 226, asparagine 227, and serine 269 each coordinate isopentenyl diphosphate.

Belongs to the IspH family. Homodimer. It depends on [4Fe-4S] cluster as a cofactor.

The enzyme catalyses isopentenyl diphosphate + 2 oxidized [2Fe-2S]-[ferredoxin] + H2O = (2E)-4-hydroxy-3-methylbut-2-enyl diphosphate + 2 reduced [2Fe-2S]-[ferredoxin] + 2 H(+). The catalysed reaction is dimethylallyl diphosphate + 2 oxidized [2Fe-2S]-[ferredoxin] + H2O = (2E)-4-hydroxy-3-methylbut-2-enyl diphosphate + 2 reduced [2Fe-2S]-[ferredoxin] + 2 H(+). Its pathway is isoprenoid biosynthesis; dimethylallyl diphosphate biosynthesis; dimethylallyl diphosphate from (2E)-4-hydroxy-3-methylbutenyl diphosphate: step 1/1. It functions in the pathway isoprenoid biosynthesis; isopentenyl diphosphate biosynthesis via DXP pathway; isopentenyl diphosphate from 1-deoxy-D-xylulose 5-phosphate: step 6/6. Functionally, catalyzes the conversion of 1-hydroxy-2-methyl-2-(E)-butenyl 4-diphosphate (HMBPP) into a mixture of isopentenyl diphosphate (IPP) and dimethylallyl diphosphate (DMAPP). Acts in the terminal step of the DOXP/MEP pathway for isoprenoid precursor biosynthesis. The protein is 4-hydroxy-3-methylbut-2-enyl diphosphate reductase of Salmonella paratyphi B (strain ATCC BAA-1250 / SPB7).